Consider the following 521-residue polypeptide: Glutamyl-tRNA(Gln) amidotransferase subunit A, mitochondrial (521 aa).

Catalysis depends on charge relay system residues Lys-61 and Ser-139. Ser-163 functions as the Acyl-ester intermediate in the catalytic mechanism.

Belongs to the amidase family. GatA subfamily. As to quaternary structure, subunit of the heterotrimeric GatCAB amidotransferase (AdT) complex, composed of A, B and C subunits.

The protein localises to the mitochondrion. It catalyses the reaction L-glutamyl-tRNA(Gln) + L-glutamine + ATP + H2O = L-glutaminyl-tRNA(Gln) + L-glutamate + ADP + phosphate + H(+). Allows the formation of correctly charged Gln-tRNA(Gln) through the transamidation of misacylated Glu-tRNA(Gln) in the mitochondria. The reaction takes place in the presence of glutamine and ATP through an activated gamma-phospho-Glu-tRNA(Gln). In Ajellomyces capsulatus (strain G186AR / H82 / ATCC MYA-2454 / RMSCC 2432) (Darling's disease fungus), this protein is Glutamyl-tRNA(Gln) amidotransferase subunit A, mitochondrial.